Reading from the N-terminus, the 153-residue chain is IAA acetyltransferase (153 aa).

Residues 4–153 form the N-acetyltransferase domain; it reads VTIARESPLQ…PLSLFMEKPL (150 aa).

Its function is as follows. Participates in the tryptophan-dependent indole-3-acetic acid production, which is a phytohormone released by A.brasilense. The protein is IAA acetyltransferase of Azospirillum brasilense.